The chain runs to 144 residues: Eukaryotic translation initiation factor 1A, Y-chromosomal (144 aa).

Residues 1-15 (MPKNKGKGGKNRRRG) show a composition bias toward basic residues. Residues 1 to 26 (MPKNKGKGGKNRRRGKNENESEKREL) are disordered. Residues 16 to 26 (KNENESEKREL) are compositionally biased toward basic and acidic residues. Residues 22 to 96 (EKRELVFKED…NKADVILKYN (75 aa)) enclose the S1-like domain. Lys88 is covalently cross-linked (Glycyl lysine isopeptide (Lys-Gly) (interchain with G-Cter in ubiquitin)). Residues 114–144 (KINETDTFGPGDDDEVQFDDIGDDDEDIDDI) are disordered. The span at 124-144 (GDDDEVQFDDIGDDDEDIDDI) shows a compositional bias: acidic residues.

Belongs to the eIF-1A family. Component of the 43S pre-initiation complex (43S PIC), which is composed of the 40S ribosomal subunit, EIF1, eIF1A (EIF1AX), eIF3 complex, EIF5 and eIF2-GTP-initiator tRNA complex (eIF2 ternary complex). Interacts with EIF5; this interaction contributes to the maintenance of EIF1 within the open 43S PIC. Interacts through its C-terminal domain (CTD) with the CTD of EIF5B; from the location of the start codon by the 43S complex until the formation of the 80S complex. As to expression, ubiquitous.

The protein resides in the cytoplasm. Its function is as follows. Component of the 43S pre-initiation complex (43S PIC), which binds to the mRNA cap-proximal region, scans mRNA 5'-untranslated region, and locates the initiation codon. This protein enhances formation of the cap-proximal complex. Together with EIF1, facilitates scanning, start codon recognition, promotion of the assembly of 48S complex at the initiation codon (43S PIC becomes 48S PIC after the start codon is reached), and dissociation of aberrant complexes. After start codon location, together with EIF5B orients the initiator methionine-tRNA in a conformation that allows 60S ribosomal subunit joining to form the 80S initiation complex. Is released after 80S initiation complex formation, just after GTP hydrolysis by EIF5B, and before release of EIF5B. Its globular part is located in the A site of the 40S ribosomal subunit. Its interaction with EIF5 during scanning contribute to the maintenance of EIF1 within the open 43S PIC. In contrast to yeast orthologs, does not bind EIF1. The sequence is that of Eukaryotic translation initiation factor 1A, Y-chromosomal (EIF1AY) from Pan troglodytes (Chimpanzee).